Consider the following 171-residue polypeptide: Ribosome maturation factor RimP (171 aa).

It belongs to the RimP family.

The protein localises to the cytoplasm. Functionally, required for maturation of 30S ribosomal subunits. This chain is Ribosome maturation factor RimP, found in Anaeromyxobacter sp. (strain Fw109-5).